The following is a 228-amino-acid chain: 2,3-bisphosphoglycerate-dependent phosphoglycerate mutase (228 aa).

Residues 8–15 (RHGQSVWN), 21–22 (TG), R60, 87–90 (ERHY), K98, 114–115 (RR), and 183–184 (GN) contribute to the substrate site. The Tele-phosphohistidine intermediate role is filled by H9. The active-site Proton donor/acceptor is the E87.

The protein belongs to the phosphoglycerate mutase family. BPG-dependent PGAM subfamily. Homodimer.

The enzyme catalyses (2R)-2-phosphoglycerate = (2R)-3-phosphoglycerate. Its pathway is carbohydrate degradation; glycolysis; pyruvate from D-glyceraldehyde 3-phosphate: step 3/5. In terms of biological role, catalyzes the interconversion of 2-phosphoglycerate and 3-phosphoglycerate. The protein is 2,3-bisphosphoglycerate-dependent phosphoglycerate mutase of Rhodospirillum centenum (strain ATCC 51521 / SW).